A 1073-amino-acid polypeptide reads, in one-letter code: Semaphorin-6D (1073 aa).

The signal sequence occupies residues 1–20; sequence MGFLLLWFCVLFLLVSRLRA. The Extracellular segment spans residues 21–662; that stretch reads VSFPEDDEPL…GESNQMVHMN (642 aa). The region spanning 27–512 is the Sema domain; sequence DEPLNTVDYH…FSSCVVRIPL (486 aa). N-linked (GlcNAc...) asparagine glycosylation is present at Asn51. Cystine bridges form between Cys108–Cys118, Cys136–Cys145, Cys259–Cys370, and Cys284–Cys329. N-linked (GlcNAc...) asparagine glycosylation is present at Asn283. Residues Asn435 and Asn461 are each glycosylated (N-linked (GlcNAc...) asparagine). Intrachain disulfides connect Cys477/Cys506, Cys515/Cys533, Cys521/Cys568, and Cys525/Cys541. A PSI domain is found at 514–569; it reads RCERYGSCKKSCIASRDPYCGWLSQGVCERVTLGMLPGGYEQDTEYGNTAHLGDCH. A glycan (N-linked (GlcNAc...) asparagine) is linked at Asn631. The helical transmembrane segment at 663–683 threads the bilayer; sequence VLITCVFAAFVLGAFIAGVAV. The Cytoplasmic segment spans residues 684–1073; the sequence is YCYRDMFVRK…SVRPLNKYTY (390 aa). A phosphoserine mark is found at Ser723, Ser734, and Ser744. Disordered regions lie at residues 745–825, 839–876, 919–986, and 1021–1073; these read RKEL…GHIP, TSFS…VDSR, PPKV…SPNG, and LQPS…KYTY. A Phosphothreonine modification is found at Thr773. Residues 790–806 are compositionally biased toward basic and acidic residues; the sequence is SHSEKAHSHGASRKEHP. Residues Ser931, Ser957, and Ser983 each carry the phosphoserine modification. Over residues 931-942 the composition is skewed to polar residues; the sequence is SPPSTLPRNSPT. Polar residues-rich tracts occupy residues 1021–1037 and 1059–1073; these read LQPS…NGTL and VPQT…KYTY.

This sequence belongs to the semaphorin family. In terms of tissue distribution, expressed in brain and lung.

The protein localises to the cell membrane. Shows growth cone collapsing activity on dorsal root ganglion (DRG) neurons in vitro. May be a stop signal for the DRG neurons in their target areas, and possibly also for other neurons. May also be involved in the maintenance and remodeling of neuronal connections. Ligand of TREM2 with PLXNA1 as coreceptor in dendritic cells, plays a role in the generation of immune responses and skeletal homeostasis. The chain is Semaphorin-6D (Sema6d) from Mus musculus (Mouse).